A 263-amino-acid chain; its full sequence is Hydroxyethylthiazole kinase (263 aa).

A substrate-binding site is contributed by Met39. 2 residues coordinate ATP: Lys115 and Thr160. Gly187 contacts substrate.

It belongs to the Thz kinase family. Requires Mg(2+) as cofactor.

The enzyme catalyses 5-(2-hydroxyethyl)-4-methylthiazole + ATP = 4-methyl-5-(2-phosphooxyethyl)-thiazole + ADP + H(+). Its pathway is cofactor biosynthesis; thiamine diphosphate biosynthesis; 4-methyl-5-(2-phosphoethyl)-thiazole from 5-(2-hydroxyethyl)-4-methylthiazole: step 1/1. Its function is as follows. Catalyzes the phosphorylation of the hydroxyl group of 4-methyl-5-beta-hydroxyethylthiazole (THZ). The chain is Hydroxyethylthiazole kinase from Staphylococcus haemolyticus (strain JCSC1435).